We begin with the raw amino-acid sequence, 122 residues long: Basic phospholipase A2 LmTX-II (122 aa).

Intrachain disulfides connect C26-C115, C28-C44, C43-C95, C49-C122, C50-C88, and C75-C86. Residues Y27, G29, and G31 each contribute to the Ca(2+) site. The active site involves H47. D48 contacts Ca(2+). Residue D89 is part of the active site.

As to quaternary structure, monomer. Ca(2+) serves as cofactor. Expressed by the venom gland.

Its subcellular location is the secreted. It carries out the reaction a 1,2-diacyl-sn-glycero-3-phosphocholine + H2O = a 1-acyl-sn-glycero-3-phosphocholine + a fatty acid + H(+). Functionally, snake venom phospholipase A2 (PLA2) that may display neurotoxic and myotoxic activities. May induce inflammatory edema by mechanisms involving mast cell activation and arachidonic acid metabolites. May increase plasma creatine kinase activity. PLA2 catalyzes the calcium-dependent hydrolysis of the 2-acyl groups in 3-sn-phosphoglycerides. This is Basic phospholipase A2 LmTX-II from Lachesis muta muta (Bushmaster).